Consider the following 532-residue polypeptide: MITINTYALQKRRTFAIISHPDAGKTTLTEKFLLNGKIIRTSGTIKARRSKKYAKSDWMEIEKKKGISITTSVIQIPYNRYLINILDTPGHQDFSEDTYRVLTAVDFCVMIVDAAKGVEERTRKLIHVARTHRTPIITFINKLDRNSLDPIEILDQLEIELKIKCSPIIWPISCGKAFKGIYHIYNNLVYFYSYKTSEGINDTNNFLLKTCCLNDVFLDKIIGLELAQEFREEVELVNSIYKAFNKRIFLESDLTPIFFGSALKNFGVNFLMQGILDWAPSPVFKKSNIRKVQPYEKNFSGFVFKIQANMDLRHRDRMAFIRIVSGKYRKRMKLYHVRIKKYIIQTEVFSFVAGDRFIIETAYPGDIIGFHSYNSIKIGDTFTEGEKLKFFGIPNFAPELFRLVSLVDPFHKKKLLKGLTQLSEEGAIQVFKPYENNELILGAIGSLQFDIVIERLKIEYNIFILVHKVNIFSIRWISSNSLDTLSTFKNQNKSCLALDINNHLVYLASSEINLRLVQSRYPDIIFNVTCEN.

The region spanning 10–283 (QKRRTFAIIS…GILDWAPSPV (274 aa)) is the tr-type G domain. Residues 19 to 26 (SHPDAGKT), 87 to 91 (DTPGH), and 141 to 144 (NKLD) contribute to the GTP site.

This sequence belongs to the TRAFAC class translation factor GTPase superfamily. Classic translation factor GTPase family. PrfC subfamily.

The protein resides in the cytoplasm. In terms of biological role, increases the formation of ribosomal termination complexes and stimulates activities of RF-1 and RF-2. It binds guanine nucleotides and has strong preference for UGA stop codons. It may interact directly with the ribosome. The stimulation of RF-1 and RF-2 is significantly reduced by GTP and GDP, but not by GMP. The sequence is that of Peptide chain release factor 3 (prfC) from Buchnera aphidicola subsp. Baizongia pistaciae (strain Bp).